Reading from the N-terminus, the 99-residue chain is UPF0122 protein UUR10_0158 (99 aa).

The protein belongs to the UPF0122 family.

In terms of biological role, might take part in the signal recognition particle (SRP) pathway. This is inferred from the conservation of its genetic proximity to ftsY/ffh. May be a regulatory protein. In Ureaplasma urealyticum serovar 10 (strain ATCC 33699 / Western), this protein is UPF0122 protein UUR10_0158.